The chain runs to 360 residues: BOLA class I histocompatibility antigen, alpha chain BL3-6 (360 aa).

An N-terminal signal peptide occupies residues 1 to 21 (MGPRALLLLLSGVLILTETRA). Residues 22-111 (GSHSLRYFST…LRGYYNQSEA (90 aa)) form an alpha-1 region. At 22 to 308 (GSHSLRYFST…QPSFLTMGII (287 aa)) the chain is on the extracellular side. N107 carries an N-linked (GlcNAc...) asparagine glycan. Residues 112–203 (GSHTLQWMSG…ENGKDTLLRA (92 aa)) form an alpha-2 region. Intrachain disulfides connect C122-C185 and C224-C280. An alpha-3 region spans residues 204 to 295 (DPPKAHVTHH…GLQEPLTLRW (92 aa)). The region spanning 206–292 (PKAHVTHHPI…QHEGLQEPLT (87 aa)) is the Ig-like C1-type domain. A connecting peptide region spans residues 296-308 (EPPQPSFLTMGII). The helical transmembrane segment at 309-328 (VGLVLLVVTGAVVAGVVICM) threads the bilayer. The Cytoplasmic portion of the chain corresponds to 329 to 360 (KKRSGEKGGNYIQASSSDSAQGSDVSLTVPKV). Residues 340-360 (IQASSSDSAQGSDVSLTVPKV) form a disordered region. Residues 341–354 (QASSSDSAQGSDVS) are compositionally biased toward low complexity. Residues S351 and S354 each carry the phosphoserine modification.

Belongs to the MHC class I family. Heterodimer of an alpha chain and a beta chain (beta-2-microglobulin).

It localises to the membrane. In terms of biological role, involved in the presentation of foreign antigens to the immune system. This chain is BOLA class I histocompatibility antigen, alpha chain BL3-6, found in Bos taurus (Bovine).